The primary structure comprises 612 residues: Glycosyltransferase 25 family member (612 aa).

The signal sequence occupies residues 1-20; that stretch reads MNKQVIFGLLLACILVCISG. 4 N-linked (GlcNAc...) asparagine glycosylation sites follow: asparagine 106, asparagine 227, asparagine 263, and asparagine 524. Residues 609-612 carry the Prevents secretion from ER motif; that stretch reads HQEL.

Belongs to the glycosyltransferase 25 family.

It localises to the endoplasmic reticulum lumen. The sequence is that of Glycosyltransferase 25 family member from Drosophila melanogaster (Fruit fly).